Consider the following 402-residue polypeptide: Protein DesVIII (402 aa).

This sequence belongs to the cytochrome P450 family. In terms of assembly, forms a complex with DesVII.

Its pathway is antibiotic biosynthesis. Functionally, involved in the biosynthesis of the macrolide antibiotics methymycin, neomethymycin, narbomycin, and pikromycin. DesVIII assists the folding of the DesVII polypeptide. However, unlike chaperones, it remains bound to DesVII during catalysis, forming a tight DesVII/DesVIII complex. Although the formation of the DesVII/DesVIII complex is essential for the catalytic activity, DesVIII is unlikely to be involved in catalysis directly. This Streptomyces venezuelae protein is Protein DesVIII.